Consider the following 319-residue polypeptide: MAVVIDTVGARPRHPEKQANPDTPVLRKPEWLRVRAPGSANYMATREVVKSNRLVTVCEEAGCPNIGECWDKSHATFMIMGEVCTRACAFCNVATGKPLALDPDEPARVGEATAKMGLKHVVVTSVDRDDLADGGAWHFVETIRAIRAASPATTIEILTPDFARKPVAALESVIDARPDVFNHNLETVPRLYLSIRPGARYYHSLRLLERVKERDPTQFTKSGIMVGLGESKEEVMQVMDDMRSAGVDFITIGQYLQPTRKHAPIDRFVHPDEFRALEEIARAKGFLMVSASPLTRSSHHAGEDFARLQAARLAKESAA.

A disordered region spans residues M1 to P24. Over residues R13–P24 the composition is skewed to basic and acidic residues. [4Fe-4S] cluster-binding residues include C58, C63, C69, C84, C88, C91, and S298. Positions W70–L287 constitute a Radical SAM core domain.

The protein belongs to the radical SAM superfamily. Lipoyl synthase family. [4Fe-4S] cluster is required as a cofactor.

It is found in the cytoplasm. It catalyses the reaction [[Fe-S] cluster scaffold protein carrying a second [4Fe-4S](2+) cluster] + N(6)-octanoyl-L-lysyl-[protein] + 2 oxidized [2Fe-2S]-[ferredoxin] + 2 S-adenosyl-L-methionine + 4 H(+) = [[Fe-S] cluster scaffold protein] + N(6)-[(R)-dihydrolipoyl]-L-lysyl-[protein] + 4 Fe(3+) + 2 hydrogen sulfide + 2 5'-deoxyadenosine + 2 L-methionine + 2 reduced [2Fe-2S]-[ferredoxin]. Its pathway is protein modification; protein lipoylation via endogenous pathway; protein N(6)-(lipoyl)lysine from octanoyl-[acyl-carrier-protein]: step 2/2. Functionally, catalyzes the radical-mediated insertion of two sulfur atoms into the C-6 and C-8 positions of the octanoyl moiety bound to the lipoyl domains of lipoate-dependent enzymes, thereby converting the octanoylated domains into lipoylated derivatives. This is Lipoyl synthase from Phenylobacterium zucineum (strain HLK1).